Here is a 506-residue protein sequence, read N- to C-terminus: Glycine--tRNA ligase (506 aa).

Arginine 99 and glutamate 189 together coordinate substrate. ATP is bound by residues 221 to 223 (RNE), 231 to 236 (FRVREF), 305 to 306 (EL), and 364 to 367 (GVDR). 236-240 (FEQME) provides a ligand contact to substrate. 360 to 364 (EPSAG) lines the substrate pocket.

This sequence belongs to the class-II aminoacyl-tRNA synthetase family. As to quaternary structure, homodimer.

The protein localises to the cytoplasm. The catalysed reaction is tRNA(Gly) + glycine + ATP = glycyl-tRNA(Gly) + AMP + diphosphate. Catalyzes the attachment of glycine to tRNA(Gly). The chain is Glycine--tRNA ligase from Thermus thermophilus (strain ATCC BAA-163 / DSM 7039 / HB27).